Consider the following 554-residue polypeptide: Probable efflux pump gsfJ (554 aa).

Helical transmembrane passes span 54–74, 93–115, 120–140, 152–172, 181–201, 206–226, 248–268, 279–299, 321–341, 349–369, 379–399, 410–430, 447–467, and 518–538; these read LAAV…DNTI, SWYG…GKFY, IKVW…ICAV, AIAG…IGFA, LLGF…LIGG, KCFY…FLLF, LVGA…LQYG, VIGL…WEIY, IYMF…PIYF, PIGS…AAIV, IVPL…GLFY, WVGY…IAMS, IVNF…QCAF, and VFAI…FGSW.

The protein belongs to the major facilitator superfamily.

The protein resides in the membrane. Its function is as follows. Probable efflux pump; part of the gene cluster that mediates the biosynthesis of griseofulvin. The sequence is that of Probable efflux pump gsfJ from Penicillium aethiopicum.